We begin with the raw amino-acid sequence, 193 residues long: uncharacterized protein (193 aa).

The next 3 membrane-spanning stretches (helical) occupy residues 5 to 25 (LILL…FIIF), 63 to 83 (IFIL…LINI), and 90 to 110 (ILTF…LTPA).

It is found in the cell membrane. This is an uncharacterized protein from Methanocaldococcus jannaschii (strain ATCC 43067 / DSM 2661 / JAL-1 / JCM 10045 / NBRC 100440) (Methanococcus jannaschii).